We begin with the raw amino-acid sequence, 476 residues long: Stromelysin-2 (476 aa).

The signal sequence occupies residues 1 to 17; the sequence is MMHLAFLVLLCLPVCSA. Residues 18 to 98 constitute a propeptide, activation peptide; it reads YPLSGAAKEE…PRCGVPDVGH (81 aa). A Cysteine switch motif is present at residues 89-96; the sequence is PRCGVPDV. The Zn(2+) site is built by Cys-91, His-167, Asp-169, His-182, His-195, and His-217. The active site involves Glu-218. Residues His-221 and His-227 each coordinate Zn(2+). Hemopexin repeat units lie at residues 286–335, 336–382, 384–432, and 433–476; these read PAKC…WPSL, PSYL…GFPP, IRKI…FPGV, and EPKV…WLHC. An intrachain disulfide couples Cys-289 to Cys-476.

It belongs to the peptidase M10A family. Zn(2+) serves as cofactor. Ca(2+) is required as a cofactor.

The protein localises to the secreted. It is found in the extracellular space. It localises to the extracellular matrix. The catalysed reaction is Similar to stromelysin 1, but action on collagen types III, IV and V is weak.. Its function is as follows. Can degrade fibronectin, gelatins of type I, III, IV, and V; weakly collagens III, IV, and V. Activates procollagenase. This is Stromelysin-2 (MMP10) from Homo sapiens (Human).